We begin with the raw amino-acid sequence, 486 residues long: ATP synthase subunit beta (486 aa).

171–178 (GGAGVGKT) lines the ATP pocket.

Belongs to the ATPase alpha/beta chains family. As to quaternary structure, F-type ATPases have 2 components, CF(1) - the catalytic core - and CF(0) - the membrane proton channel. CF(1) has five subunits: alpha(3), beta(3), gamma(1), delta(1), epsilon(1). CF(0) has three main subunits: a(1), b(2) and c(9-12). The alpha and beta chains form an alternating ring which encloses part of the gamma chain. CF(1) is attached to CF(0) by a central stalk formed by the gamma and epsilon chains, while a peripheral stalk is formed by the delta and b chains.

It localises to the cell membrane. It catalyses the reaction ATP + H2O + 4 H(+)(in) = ADP + phosphate + 5 H(+)(out). Produces ATP from ADP in the presence of a proton gradient across the membrane. The catalytic sites are hosted primarily by the beta subunits. The polypeptide is ATP synthase subunit beta (Salinispora tropica (strain ATCC BAA-916 / DSM 44818 / JCM 13857 / NBRC 105044 / CNB-440)).